Here is a 280-residue protein sequence, read N- to C-terminus: MENNEEFQDELLALESIYPSCLLPISEQSFTYTLSIPDSSVRLNIQFPLDYPNSAPTVLDAYGIDKTLAEDVLLSVATGDVCIFSYMDLLKELVDIDAEQAAAERESKLQEESDKETPVMLNKSHYVAKTPEIQDEPWKPKFDWKESEPITDRKSTFMAHATRVYSTEEVREALEDLYMDKKVAKANHNMVAYRIISPNGNVIQDNDDDGESAAGSRMSHLLTMMSAENVFVCVSRWFGGVHIGPDRFKHINSSAREAVLLTDAAPSQKKGTEHGKKKKK.

The region spanning 9 to 109 (DELLALESIY…QAAAERESKL (101 aa)) is the RWD domain.

Belongs to the IMPACT family. In terms of assembly, interacts (via N-terminus) with gcn1 (via C-terminus); this interaction reduces the gcn1-gcn20 complex formation and prevents the interaction of gcn1 with gcn2 protein kinase and gcn2 activation in amino acid-starved cells. Interacts (via C-terminus) with act1; this interaction occurs in a gcn1-independent manner. Interacts with rpl39; this interaction occurs in a gcn1-independent manner. Associates (via middle region) with ribosomes; this association occurs in a gcn1-independent manner and persists under amino acid starvation conditions.

The protein resides in the cytoplasm. It is found in the nucleus. Functionally, translational regulator that ensures constant high levels of translation under amino acid starvation. Plays a role as a negative regulator of the gcn2 kinase activity; impairs gcn1-mediated gcn2 activation, and hence gcn2-mediated eIF-2-alpha phosphorylation in amino acid-starved cells and subsequent down-regulation of protein synthesis. In normal conditions, it resides in a actin complex and has no activity. This is Protein IMPACT homolog (yih1) from Schizosaccharomyces pombe (strain 972 / ATCC 24843) (Fission yeast).